A 176-amino-acid chain; its full sequence is Late lactation protein (176 aa).

The signal sequence occupies residues 1–18 (MKVLFFTIALSLFSILHA). A disulfide bridge connects residues Cys-78 and Cys-171.

It belongs to the calycin superfamily. Lipocalin family. Mammary gland. Secreted in milk.

Its subcellular location is the secreted. Its function is as follows. Probably serves a role in the transport of a small ligand released during the hydrolysis of milk fat. This Trichosurus vulpecula (Brush-tailed possum) protein is Late lactation protein.